We begin with the raw amino-acid sequence, 872 residues long: Protein SEY1 (872 aa).

Residues 1-749 (MVANGHFAGV…KRSAIGGITQ (749 aa)) are Cytoplasmic-facing. The GB1/RHD3-type G domain occupies 49 to 307 (GFNYHLISVF…IPADGFAVYA (259 aa)). GTP is bound at residue 59–66 (GSQSTGKS). Residues 482 to 504 (SNYQQELSLYQKDLENIGGQLRR) are a coiled coil. The segment at 676 to 704 (LDKWIGHTPSSATPADEEDLTPIGGVDED) is disordered. Residues 690-704 (ADEEDLTPIGGVDED) are compositionally biased toward acidic residues. Residues 750–770 (VPLYFYGLLLALGWNEIVAVL) traverse the membrane as a helical segment. Over 771-773 (RNP) the chain is Lumenal. Residues 774–794 (AYFLLLFVCAVTAYVTYQLNL) form a helical membrane-spanning segment. The Cytoplasmic portion of the chain corresponds to 795 to 872 (WGPIIKMTEA…IDDADDDDDF (78 aa)). The tract at residues 849–872 (NRKSAGGFQNNRSHIDDADDDDDF) is disordered.

This sequence belongs to the TRAFAC class dynamin-like GTPase superfamily. GB1/RHD3 GTPase family. RHD3 subfamily.

It localises to the endoplasmic reticulum membrane. Its function is as follows. Cooperates with the reticulon proteins and tubule-shaping DP1 family proteins to generate and maintain the structure of the tubular endoplasmic reticulum network. Has GTPase activity, which is required for its function in ER organization. The chain is Protein SEY1 from Paracoccidioides brasiliensis (strain Pb18).